The primary structure comprises 303 residues: Nucleotide-binding protein Acry_0446 (303 aa).

10 to 17 (GLSGAGRN) is an ATP binding site. 54 to 57 (DART) is a GTP binding site.

It belongs to the RapZ-like family.

In terms of biological role, displays ATPase and GTPase activities. The sequence is that of Nucleotide-binding protein Acry_0446 from Acidiphilium cryptum (strain JF-5).